The following is a 245-amino-acid chain: Ribonuclease 3 (245 aa).

Residues 19–148 enclose the RNase III domain; the sequence is FRAFQQKLGI…FIGALYLDQG (130 aa). Residue Glu-61 participates in Mg(2+) binding. Asp-65 is a catalytic residue. Positions 134 and 137 each coordinate Mg(2+). Glu-137 is an active-site residue. One can recognise a DRBM domain in the interval 174-243; it reads DYKSQLQELI…AAEALRKLKE (70 aa).

This sequence belongs to the ribonuclease III family. As to quaternary structure, homodimer. Mg(2+) is required as a cofactor.

Its subcellular location is the cytoplasm. It catalyses the reaction Endonucleolytic cleavage to 5'-phosphomonoester.. Digests double-stranded RNA. Involved in the processing of primary rRNA transcript to yield the immediate precursors to the large and small rRNAs (23S and 16S). Processes some mRNAs, and tRNAs when they are encoded in the rRNA operon. Processes pre-crRNA and tracrRNA of type II CRISPR loci if present in the organism. This Bacillus cytotoxicus (strain DSM 22905 / CIP 110041 / 391-98 / NVH 391-98) protein is Ribonuclease 3.